Consider the following 1364-residue polypeptide: Trifunctional purine biosynthetic protein adenosine-3 (1364 aa).

The region spanning Lys114–Ser321 is the ATP-grasp domain. Residue Ile140–Ser202 coordinates ATP. The Mn(2+) site is built by Glu291 and Asn293. Positions Ala435–Pro1154 are AIRS. The tract at residues Arg1155–Gln1364 is GART. N(1)-(5-phospho-beta-D-ribosyl)glycinamide is bound at residue Gly1166–Asn1168. Residues Arg1221, Met1246–Leu1249, and Asn1263 contribute to the (6R)-10-formyltetrahydrofolate site. His1265 serves as the catalytic Proton donor. Asp1297–Asp1301 provides a ligand contact to (6R)-10-formyltetrahydrofolate. His1327–Glu1330 is a binding site for N(1)-(5-phospho-beta-D-ribosyl)glycinamide.

In the N-terminal section; belongs to the GARS family. This sequence in the central section; belongs to the AIR synthase family. It in the C-terminal section; belongs to the GART family.

It catalyses the reaction 5-phospho-beta-D-ribosylamine + glycine + ATP = N(1)-(5-phospho-beta-D-ribosyl)glycinamide + ADP + phosphate + H(+). It carries out the reaction 2-formamido-N(1)-(5-O-phospho-beta-D-ribosyl)acetamidine + ATP = 5-amino-1-(5-phospho-beta-D-ribosyl)imidazole + ADP + phosphate + H(+). The catalysed reaction is N(1)-(5-phospho-beta-D-ribosyl)glycinamide + (6R)-10-formyltetrahydrofolate = N(2)-formyl-N(1)-(5-phospho-beta-D-ribosyl)glycinamide + (6S)-5,6,7,8-tetrahydrofolate + H(+). The protein operates within purine metabolism; IMP biosynthesis via de novo pathway; 5-amino-1-(5-phospho-D-ribosyl)imidazole from N(2)-formyl-N(1)-(5-phospho-D-ribosyl)glycinamide: step 2/2. It functions in the pathway purine metabolism; IMP biosynthesis via de novo pathway; N(1)-(5-phospho-D-ribosyl)glycinamide from 5-phospho-alpha-D-ribose 1-diphosphate: step 2/2. Its pathway is purine metabolism; IMP biosynthesis via de novo pathway; N(2)-formyl-N(1)-(5-phospho-D-ribosyl)glycinamide from N(1)-(5-phospho-D-ribosyl)glycinamide (10-formyl THF route): step 1/1. Functionally, trifunctional enzyme required for de novo purine biosynthesis. The sequence is that of Trifunctional purine biosynthetic protein adenosine-3 (ade3) from Drosophila pseudoobscura pseudoobscura (Fruit fly).